The sequence spans 359 residues: Phosphoserine aminotransferase (359 aa).

L-glutamate is bound at residue arginine 41. Positions 101, 151, 170, and 193 each coordinate pyridoxal 5'-phosphate. Lysine 194 carries the N6-(pyridoxal phosphate)lysine modification. Asparagine 235–threonine 236 serves as a coordination point for pyridoxal 5'-phosphate.

Belongs to the class-V pyridoxal-phosphate-dependent aminotransferase family. SerC subfamily. In terms of assembly, homodimer. Requires pyridoxal 5'-phosphate as cofactor.

The protein localises to the cytoplasm. It carries out the reaction O-phospho-L-serine + 2-oxoglutarate = 3-phosphooxypyruvate + L-glutamate. The catalysed reaction is 4-(phosphooxy)-L-threonine + 2-oxoglutarate = (R)-3-hydroxy-2-oxo-4-phosphooxybutanoate + L-glutamate. It functions in the pathway amino-acid biosynthesis; L-serine biosynthesis; L-serine from 3-phospho-D-glycerate: step 2/3. The protein operates within cofactor biosynthesis; pyridoxine 5'-phosphate biosynthesis; pyridoxine 5'-phosphate from D-erythrose 4-phosphate: step 3/5. In terms of biological role, catalyzes the reversible conversion of 3-phosphohydroxypyruvate to phosphoserine and of 3-hydroxy-2-oxo-4-phosphonooxybutanoate to phosphohydroxythreonine. The protein is Phosphoserine aminotransferase of Laribacter hongkongensis (strain HLHK9).